Here is a 488-residue protein sequence, read N- to C-terminus: Glutamyl-tRNA(Gln) amidotransferase subunit B, mitochondrial (488 aa).

It belongs to the GatB/GatE family. GatB subfamily. In terms of assembly, subunit of the heterotrimeric GatFAB amidotransferase (AdT) complex, composed of A, B and F subunits.

Its subcellular location is the mitochondrion. The enzyme catalyses L-glutamyl-tRNA(Gln) + L-glutamine + ATP + H2O = L-glutaminyl-tRNA(Gln) + L-glutamate + ADP + phosphate + H(+). Allows the formation of correctly charged Gln-tRNA(Gln) through the transamidation of misacylated Glu-tRNA(Gln) in the mitochondria. The reaction takes place in the presence of glutamine and ATP through an activated gamma-phospho-Glu-tRNA(Gln). The sequence is that of Glutamyl-tRNA(Gln) amidotransferase subunit B, mitochondrial from Candida albicans (strain SC5314 / ATCC MYA-2876) (Yeast).